The chain runs to 408 residues: 3-ketoacyl-CoA thiolase B, peroxisomal (408 aa).

The Acyl-thioester intermediate role is filled by Cys-112. Catalysis depends on proton acceptor residues His-366 and Cys-394.

This sequence belongs to the thiolase-like superfamily. Thiolase family. As to quaternary structure, homodimer.

The protein localises to the peroxisome. The enzyme catalyses an acyl-CoA + acetyl-CoA = a 3-oxoacyl-CoA + CoA. It functions in the pathway lipid metabolism; fatty acid metabolism. This is 3-ketoacyl-CoA thiolase B, peroxisomal from Candida tropicalis (Yeast).